Consider the following 348-residue polypeptide: Sec-independent protein translocase protein TatC (348 aa).

The next 6 membrane-spanning stretches (helical) occupy residues 7–27 (LCLT…MDIL), 162–182 (VVIS…PGLL), 192–212 (CMAV…FIVL), 244–264 (MILM…FVKL), 278–298 (YAIV…DVAT), and 299–319 (MMLM…LAWM).

This sequence belongs to the TatC family. As to quaternary structure, forms a complex with TatA.

The protein localises to the cell membrane. Its function is as follows. Part of the twin-arginine translocation (Tat) system that transports large folded proteins containing a characteristic twin-arginine motif in their signal peptide across membranes. This is Sec-independent protein translocase protein TatC from Akkermansia muciniphila (strain ATCC BAA-835 / DSM 22959 / JCM 33894 / BCRC 81048 / CCUG 64013 / CIP 107961 / Muc).